Here is a 281-residue protein sequence, read N- to C-terminus: uncharacterized protein (281 aa).

This is an uncharacterized protein from Mycoplasma genitalium (strain ATCC 33530 / DSM 19775 / NCTC 10195 / G37) (Mycoplasmoides genitalium).